A 149-amino-acid chain; its full sequence is 18 kDa antigen 1 (149 aa).

The sHSP domain occupies 21–131 (TAARPAVMPM…KPRKIAVGRG (111 aa)).

Belongs to the small heat shock protein (HSP20) family.

Not known. This protein is one of the major immune reactive proteins in mycobacteria. The polypeptide is 18 kDa antigen 1 (Mycobacterium intracellulare).